Consider the following 182-residue polypeptide: Methyl-CpG-binding domain-containing protein 5 (182 aa).

Disordered stretches follow at residues 1-56 and 80-126; these read MSNG…GTVD and HGTP…KPLN. Positions 25 to 101 constitute an MBD domain; sequence KRATPGDDNW…ENGDSHSEHS (77 aa). A compositionally biased stretch (basic and acidic residues) spans 92 to 105; that stretch reads ENGDSHSEHSEGRG. Basic residues predominate over residues 106-115; the sequence is SARRQTKSNK.

Homodimer and heterodimer with MBD6. Interacts with DDM1 via its MBD domain. In terms of tissue distribution, mostly expressed in flowers, and, to a lower extent, in seedlings, buds, stems and mature seeds, but barely in roots, exclusively in root meristem cells at tips (at protein level).

It localises to the nucleus. It is found in the chromosome. Functionally, transcriptional regulator that binds CpG islands in promoters where the DNA is methylated at position 5 of cytosine within CpG dinucleotides. In addition, binds specifically methylated m(5)CpNpN but not m(5)CpNpG (N is A, T or C). Plays probably a role in gene silencing. In Arabidopsis thaliana (Mouse-ear cress), this protein is Methyl-CpG-binding domain-containing protein 5 (MBD5).